The primary structure comprises 253 residues: Octanoyltransferase (253 aa).

A BPL/LPL catalytic domain is found at 47 to 236 (PETPDQVWLV…ALCEVLAARE (190 aa)). Substrate-binding positions include 87-94 (RGGQITYH), 159-161 (ALG), and 172-174 (GVS). The active-site Acyl-thioester intermediate is cysteine 190.

Belongs to the LipB family.

Its subcellular location is the cytoplasm. The catalysed reaction is octanoyl-[ACP] + L-lysyl-[protein] = N(6)-octanoyl-L-lysyl-[protein] + holo-[ACP] + H(+). The protein operates within protein modification; protein lipoylation via endogenous pathway; protein N(6)-(lipoyl)lysine from octanoyl-[acyl-carrier-protein]: step 1/2. In terms of biological role, catalyzes the transfer of endogenously produced octanoic acid from octanoyl-acyl-carrier-protein onto the lipoyl domains of lipoate-dependent enzymes. Lipoyl-ACP can also act as a substrate although octanoyl-ACP is likely to be the physiological substrate. This is Octanoyltransferase from Cupriavidus pinatubonensis (strain JMP 134 / LMG 1197) (Cupriavidus necator (strain JMP 134)).